A 463-amino-acid chain; its full sequence is ATP-dependent protease ATPase subunit HslU (463 aa).

Residues isoleucine 19, 61-66, aspartate 277, glutamate 341, and arginine 413 contribute to the ATP site; that span reads GVGKTE.

This sequence belongs to the ClpX chaperone family. HslU subfamily. In terms of assembly, a double ring-shaped homohexamer of HslV is capped on each side by a ring-shaped HslU homohexamer. The assembly of the HslU/HslV complex is dependent on binding of ATP.

The protein resides in the cytoplasm. Its function is as follows. ATPase subunit of a proteasome-like degradation complex; this subunit has chaperone activity. The binding of ATP and its subsequent hydrolysis by HslU are essential for unfolding of protein substrates subsequently hydrolyzed by HslV. HslU recognizes the N-terminal part of its protein substrates and unfolds these before they are guided to HslV for hydrolysis. In Bacillus anthracis (strain A0248), this protein is ATP-dependent protease ATPase subunit HslU.